The sequence spans 252 residues: Trans-aconitate 2-methyltransferase (252 aa).

This sequence belongs to the methyltransferase superfamily. Tam family.

Its subcellular location is the cytoplasm. It carries out the reaction trans-aconitate + S-adenosyl-L-methionine = (E)-3-(methoxycarbonyl)pent-2-enedioate + S-adenosyl-L-homocysteine. Its function is as follows. Catalyzes the S-adenosylmethionine monomethyl esterification of trans-aconitate. The protein is Trans-aconitate 2-methyltransferase of Escherichia coli (strain ATCC 8739 / DSM 1576 / NBRC 3972 / NCIMB 8545 / WDCM 00012 / Crooks).